Reading from the N-terminus, the 317-residue chain is Melanocyte-stimulating hormone receptor (317 aa).

Topologically, residues 1-37 (MPVQGSQRRLLGSLNSTPTATPRLGLAANQTGARCLE) are extracellular. The N-linked (GlcNAc...) asparagine glycan is linked to asparagine 29. A helical membrane pass occupies residues 38 to 63 (VSIPDGLFLSLGLVSLVENVLVVVAI). Residues 64-72 (ARNRNLHSP) are Cytoplasmic-facing. The helical transmembrane segment at 73–93 (MYCFICCLALSDLLVSGSNML) threads the bilayer. Topologically, residues 94–118 (ETAVILLLEAGALAARAAVVQQLDN) are extracellular. Residues 119-140 (VIDVITCSSMLSSLCFLGAIAV) traverse the membrane as a helical segment. Residues 141–163 (DRYISIFYALRYHSIVTLRRARR) lie on the Cytoplasmic side of the membrane. A helical transmembrane segment spans residues 164 to 183 (VVAAIWVASVLFSTLFIAYC). At 184–191 (DHAAVLLS) the chain is on the extracellular side. The chain crosses the membrane as a helical span at residues 192–211 (LVVFFLAMLVLMAVLYVHML). Residues 212–240 (ARACQHAQGIAQLHKRQRPAHQGVGLKGA) are Cytoplasmic-facing. The chain crosses the membrane as a helical span at residues 241-266 (ATLTILLGIFFLCWGPFFLHLTLIVL). The Extracellular segment spans residues 267–279 (CPQHPTCSCIFKN). A helical membrane pass occupies residues 280 to 300 (FNLFLTLIICNAIIDPLIYAF). The Cytoplasmic segment spans residues 301 to 317 (RSQELRRTLKKVLLCSW). The S-palmitoyl cysteine moiety is linked to residue cysteine 315.

The protein belongs to the G-protein coupled receptor 1 family. As to quaternary structure, interacts with MGRN1, but does not undergo MGRN1-mediated ubiquitination; this interaction competes with GNAS-binding and thus inhibits agonist-induced cAMP production. Interacts with OPN3; the interaction results in a decrease in MC1R-mediated cAMP signaling and ultimately a decrease in melanin production in melanocytes.

It is found in the cell membrane. Its function is as follows. Receptor for MSH (alpha, beta and gamma) and ACTH. The activity of this receptor is mediated by G proteins which activate adenylate cyclase. Mediates melanogenesis, the production of eumelanin (black/brown) and phaeomelanin (red/yellow), via regulation of cAMP signaling in melanocytes. The protein is Melanocyte-stimulating hormone receptor (MC1R) of Trachypithecus auratus (Javan langur).